The chain runs to 379 residues: Very late expression factor 1 (379 aa).

The Tyr recombinase domain occupies 169–348 (VIDTILNFIN…YNIGLDETSS (180 aa)). Catalysis depends on residues arginine 210, lysine 239, arginine 303, and histidine 326. Catalysis depends on tyrosine 335, which acts as the O-(3'-phospho-DNA)-tyrosine intermediate. A compositionally biased stretch (acidic residues) spans 346–358 (TSSEEENNNDDDD). The interval 346 to 379 (TSSEEENNNDDDDAQHNRNSSGSSGESLLYYRNE) is disordered. A compositionally biased stretch (low complexity) spans 362-379 (NRNSSGSSGESLLYYRNE).

The protein belongs to the 'phage' integrase family.

Functionally, plays a role in nucleocapsid assembly and serves an essential function during the final stages of the DNA packaging process. Participates in the processing of branched DNA molecules at the late stages of viral genome replication. This chain is Very late expression factor 1 (VLF-1), found in Lepidoptera (butterflies and moths).